Here is a 427-residue protein sequence, read N- to C-terminus: rRNA-processing protein EBP2 (427 aa).

2 stretches are compositionally biased toward basic and acidic residues: residues 29–40 (KKKSQELKKEEP) and 49–65 (KKLEKKEKKADVKKEVA). A disordered region spans residues 29–190 (KKKSQELKKE…FDSDADVVPH (162 aa)). Positions 45–174 (ASNLKKLEKK…KEEQEEEQDV (130 aa)) form a coiled coil. The segment covering 79-88 (KEKRKLKKEL) has biased composition (basic residues). Residues 89–105 (KKMQEQDATEAQKHMSG) are compositionally biased toward basic and acidic residues. The residue at position 104 (serine 104) is a Phosphoserine. Acidic residues predominate over residues 106–126 (DEDESGDDREEEEEEEEEEEG). A compositionally biased stretch (basic and acidic residues) spans 127–138 (RLDLEKLAKSDS). Acidic residues-rich tracts occupy residues 139 to 155 (ESEDDSESENDSEEDED) and 163 to 185 (EEKEEQEEEQDVPLSDVEFDSDA). 2 positions are modified to phosphoserine: serine 177 and serine 183. 2 coiled-coil regions span residues 234 to 265 (KDIYDDTERELAFYKQSLDAVLVARDELKRLK) and 291 to 348 (KLIE…KHNE). A disordered region spans residues 361–427 (EVEGKRFDRG…PGKSRRARRF (67 aa)). A compositionally biased stretch (polar residues) spans 397 to 407 (ATSSADVSGFS). Over residues 409 to 427 (RKMKGKTNRPGKSRRARRF) the composition is skewed to basic residues.

It belongs to the EBP2 family. As to quaternary structure, interacts with LOC1, NOP12, SIZ2, ULS1 and WSS1. Sumoylated.

It localises to the nucleus. Its subcellular location is the nucleolus. Its function is as follows. Required for the processing of the 27S pre-rRNA. Probably involved in the step of the processing of the 27 SA precursor into the 27 SB intermediate. The sequence is that of rRNA-processing protein EBP2 (EBP2) from Saccharomyces cerevisiae (strain ATCC 204508 / S288c) (Baker's yeast).